Consider the following 857-residue polypeptide: A-kinase anchor protein 1, mitochondrial (857 aa).

The N-terminal 29 residues, 1 to 29, are a transit peptide targeting the mitochondrion; sequence MAIQLRSLFPLALPGMLALLGWWWFFSRK. Position 55 is a phosphoserine (Ser-55). Residues 65–121 are disordered; the sequence is VAPTVTQPPGREEQRCVDKPSTEPLALPRTRQVRRRSESSGNLPSVADTRSQPGPCR. Residues 74 to 85 show a composition bias toward basic and acidic residues; sequence GREEQRCVDKPS. Ser-101, Ser-103, and Ser-164 each carry phosphoserine. A compositionally biased stretch (polar residues) spans 103–116; it reads SSGNLPSVADTRSQ. Disordered stretches follow at residues 165–198 and 260–303; these read ALGK…GDAV and FVEP…VPEN. Over residues 286–299 the composition is skewed to basic and acidic residues; sequence SDRDLAGELDKDET. Residues 306–319 are PKA-RII subunit binding domain; the sequence is IKQAAFQLISQVIL. 3 disordered regions span residues 336–437, 466–497, and 512–554; these read QVHP…NPRG, STSG…TQPF, and EDGW…QAGS. Residues 354-379 show a composition bias toward polar residues; it reads PASQETSLGQDTSDPASTRTGATASP. Thr-401 carries the post-translational modification Phosphothreonine. The span at 466-482 shows a compositional bias: polar residues; that stretch reads STSGLEDSCTETISSSG. The residue at position 487 (Thr-487) is a Phosphothreonine. Ser-527 and Ser-546 each carry phosphoserine. Polar residues predominate over residues 545-554; it reads DSPQSVQAGS. The KH domain maps to 561–625; the sequence is LIIWEIEVPK…HHVDKALNLI (65 aa). The 60-residue stretch at 712–771 folds into the Tudor domain; sequence PVEITVICAAPGADGAWWRAQVVASYEETNEVEIRYVDYGGYKRVKVDVLRQIRSDFVTL.

Interacts with SLC8A3. Interacts with CFAP91. Interacts with CLPB. Interacts with NDUFS1. Highest expression in testis, heart, liver, skeletal muscle, intestine and kidney, followed by brain and lung. No expression in spleen. Isoform 1/D-AKAP1A is expressed predominantly in testis whereas isoform 4/D-AKAP1D is expressed primarily in liver. Expression is decreased in hearts of diabetic mice (at protein level).

The protein localises to the mitochondrion outer membrane. Its subcellular location is the mitochondrion. It is found in the endoplasmic reticulum. Differentially targeted protein that binds to type I and II regulatory subunits of protein kinase A. Anchors them to the cytoplasmic face of the mitochondrial outer membrane or allows them to reside in the endoplasmic reticulum. Involved in mitochondrial-mediated antiviral innate immunity. Promotes translocation of NDUFS1 into mitochondria to regulate mitochondrial membrane respiratory chain NADH dehydrogenase (Complex I) activity. Under diabetic conditions, myocardial AKAP1 expression decreases which blocks the translocation of NDUFS1 from the cytosol to mitochondria. Reduction of NDUFS1 in mitochondria decreases ATP production and increases mitochondrial ROS level, which causes mitochondrial dysfunction and cell apoptosis, respectively, thereby leading to cardiac dysfunction. The chain is A-kinase anchor protein 1, mitochondrial from Mus musculus (Mouse).